The primary structure comprises 227 residues: Cytochrome c oxidase subunit 2 (227 aa).

Topologically, residues 1–14 (MALPFQLGFQDATS) are mitochondrial intermembrane. The helical transmembrane segment at 15–45 (PIMEELLHFHDHTLMIVFMISSLVLYLISSM) threads the bilayer. Over 46-59 (LTTRLTHTSTMDAQ) the chain is Mitochondrial matrix. The chain crosses the membrane as a helical span at residues 60 to 87 (EVETIWTILPAIILITIALPSLRILYMM). Over 88 to 227 (DEINNPSMTI…CFEKWSTSML (140 aa)) the chain is Mitochondrial intermembrane. Cu cation-binding residues include His161, Cys196, Glu198, Cys200, His204, and Met207. Glu198 lines the Mg(2+) pocket.

The protein belongs to the cytochrome c oxidase subunit 2 family. Component of the cytochrome c oxidase (complex IV, CIV), a multisubunit enzyme composed of 14 subunits. The complex is composed of a catalytic core of 3 subunits MT-CO1, MT-CO2 and MT-CO3, encoded in the mitochondrial DNA, and 11 supernumerary subunits COX4I, COX5A, COX5B, COX6A, COX6B, COX6C, COX7A, COX7B, COX7C, COX8 and NDUFA4, which are encoded in the nuclear genome. The complex exists as a monomer or a dimer and forms supercomplexes (SCs) in the inner mitochondrial membrane with NADH-ubiquinone oxidoreductase (complex I, CI) and ubiquinol-cytochrome c oxidoreductase (cytochrome b-c1 complex, complex III, CIII), resulting in different assemblies (supercomplex SCI(1)III(2)IV(1) and megacomplex MCI(2)III(2)IV(2)). Found in a complex with TMEM177, COA6, COX18, COX20, SCO1 and SCO2. Interacts with TMEM177 in a COX20-dependent manner. Interacts with COX20. Interacts with COX16. Requires Cu cation as cofactor.

It localises to the mitochondrion inner membrane. The enzyme catalyses 4 Fe(II)-[cytochrome c] + O2 + 8 H(+)(in) = 4 Fe(III)-[cytochrome c] + 2 H2O + 4 H(+)(out). Component of the cytochrome c oxidase, the last enzyme in the mitochondrial electron transport chain which drives oxidative phosphorylation. The respiratory chain contains 3 multisubunit complexes succinate dehydrogenase (complex II, CII), ubiquinol-cytochrome c oxidoreductase (cytochrome b-c1 complex, complex III, CIII) and cytochrome c oxidase (complex IV, CIV), that cooperate to transfer electrons derived from NADH and succinate to molecular oxygen, creating an electrochemical gradient over the inner membrane that drives transmembrane transport and the ATP synthase. Cytochrome c oxidase is the component of the respiratory chain that catalyzes the reduction of oxygen to water. Electrons originating from reduced cytochrome c in the intermembrane space (IMS) are transferred via the dinuclear copper A center (CU(A)) of subunit 2 and heme A of subunit 1 to the active site in subunit 1, a binuclear center (BNC) formed by heme A3 and copper B (CU(B)). The BNC reduces molecular oxygen to 2 water molecules using 4 electrons from cytochrome c in the IMS and 4 protons from the mitochondrial matrix. The sequence is that of Cytochrome c oxidase subunit 2 (MT-CO2) from Phyllostomus hastatus (Greater spear-nosed bat).